The sequence spans 572 residues: Arginine--tRNA ligase (572 aa).

A 'HIGH' region motif is present at residues 122 to 132 (PNLAKEMHVGH).

The protein belongs to the class-I aminoacyl-tRNA synthetase family. As to quaternary structure, monomer.

It localises to the cytoplasm. The catalysed reaction is tRNA(Arg) + L-arginine + ATP = L-arginyl-tRNA(Arg) + AMP + diphosphate. This Neisseria gonorrhoeae (strain ATCC 700825 / FA 1090) protein is Arginine--tRNA ligase.